Consider the following 477-residue polypeptide: Protein U33 (477 aa).

It belongs to the herpesviridae UL49 family.

The sequence is that of Protein U33 (U33) from Homo sapiens (Human).